Reading from the N-terminus, the 338-residue chain is UPF0324 membrane protein TauZ (338 aa).

Helical transmembrane passes span 36–55, 75–92, 96–118, 125–147, 162–184, 223–245, 255–277, 290–309, and 314–336; these read YGAPAMLLALLLGLALNFLA, LGVALLGARISAGMLAAL, AIALVVAGVVLTILFALAASRLV, ALLTGGSVAICGASAAMAIAAVL, LSVTVLSTVAMVLYPMLAGLFGF, LIRVSMLAPVVLCFSLAIRARGL, PLLPGFVIGFLALAGLNSLGLIP, WALLIAIAAVGIKTSLGKML, and GAIALILAETVFLAVFVTAGLHL.

This sequence belongs to the UPF0324 family.

It is found in the cell membrane. The polypeptide is UPF0324 membrane protein TauZ (tauZ) (Paracoccus pantotrophus (Thiosphaera pantotropha)).